The chain runs to 301 residues: Tyrosine recombinase XerC (301 aa).

The Core-binding (CB) domain maps to 1 to 85; the sequence is MELISLFKQY…ALRSFYRFLV (85 aa). Residues 106 to 292 form the Tyr recombinase domain; it reads KLPHFFYEKE…TKEKLQESYR (187 aa). Active-site residues include Arg147, Lys171, His244, Arg247, and His270. Tyr279 (O-(3'-phospho-DNA)-tyrosine intermediate) is an active-site residue.

The protein belongs to the 'phage' integrase family. XerC subfamily. As to quaternary structure, forms a cyclic heterotetrameric complex composed of two molecules of XerC and two molecules of XerD.

The protein resides in the cytoplasm. Site-specific tyrosine recombinase, which acts by catalyzing the cutting and rejoining of the recombining DNA molecules. The XerC-XerD complex is essential to convert dimers of the bacterial chromosome into monomers to permit their segregation at cell division. It also contributes to the segregational stability of plasmids. This chain is Tyrosine recombinase XerC, found in Pediococcus pentosaceus (strain ATCC 25745 / CCUG 21536 / LMG 10740 / 183-1w).